The following is a 1396-amino-acid chain: DNA-directed RNA polymerase subunit beta' (1396 aa).

The Zn(2+) site is built by Cys72, Cys74, Cys87, and Cys90. The Mg(2+) site is built by Asp463, Asp465, and Asp467. Zn(2+)-binding residues include Cys814, Cys889, Cys896, and Cys899.

Belongs to the RNA polymerase beta' chain family. As to quaternary structure, the RNAP catalytic core consists of 2 alpha, 1 beta, 1 beta' and 1 omega subunit. When a sigma factor is associated with the core the holoenzyme is formed, which can initiate transcription. Requires Mg(2+) as cofactor. Zn(2+) is required as a cofactor.

The enzyme catalyses RNA(n) + a ribonucleoside 5'-triphosphate = RNA(n+1) + diphosphate. In terms of biological role, DNA-dependent RNA polymerase catalyzes the transcription of DNA into RNA using the four ribonucleoside triphosphates as substrates. The polypeptide is DNA-directed RNA polymerase subunit beta' (Chlamydia trachomatis serovar A (strain ATCC VR-571B / DSM 19440 / HAR-13)).